Reading from the N-terminus, the 215-residue chain is Interleukin-12 subunit alpha (215 aa).

A signal peptide spans 1 to 22; the sequence is MCQSRYLLFLATLVLLNHLTSA. 3 cysteine pairs are disulfide-bonded: C33–C106, C60–C192, and C81–C119. 3 N-linked (GlcNAc...) asparagine glycosylation sites follow: N35, N89, and N167.

It belongs to the IL-6 superfamily. In terms of assembly, heterodimer with IL12B; disulfide-linked. This heterodimer is known as interleukin IL-12. Heterodimer with EBI3/IL27B; not disulfide-linked. This heterodimer is known as interleukin IL-35. Interacts with NBR1; this interaction promotes IL-12 secretion.

It localises to the secreted. In terms of biological role, heterodimerizes with IL12B to form the IL-12 cytokine or with EBI3/IL27B to form the IL-35 cytokine. IL-12 is primarily produced by professional antigen-presenting cells (APCs) such as B-cells and dendritic cells (DCs) as well as macrophages and granulocytes and regulates T-cell and natural killer-cell responses, induces the production of interferon-gamma (IFN-gamma), favors the differentiation of T-helper 1 (Th1) cells and is an important link between innate resistance and adaptive immunity. Mechanistically, exerts its biological effects through a receptor composed of IL12R1 and IL12R2 subunits. Binding to the receptor results in the rapid tyrosine phosphorylation of a number of cellular substrates including the JAK family kinases TYK2 and JAK2. In turn, recruited STAT4 gets phosphorylated and translocates to the nucleus where it regulates cytokine/growth factor responsive genes. As part of IL-35, plays essential roles in maintaining the immune homeostasis of the liver microenvironment and also functions as an immune-suppressive cytokine. Mediates biological events through unconventional receptors composed of IL12RB2 and gp130/IL6ST heterodimers or homodimers. Signaling requires the transcription factors STAT1 and STAT4, which form a unique heterodimer that binds to distinct DNA sites. The protein is Interleukin-12 subunit alpha (Il12a) of Rattus norvegicus (Rat).